The following is a 195-amino-acid chain: Keratin-associated protein 4-3 (195 aa).

Repeat copies occupy residues 34–38 (CCRTT), 39–43 (CCRPS), 44–48 (CCISS), 49–53 (CCRPS), 54–58 (CCISS), 59–63 (CCKPS), 64–68 (CCRTT), 69–73 (CCRPS), 74–78 (CCISS), 79–83 (CCRPS), 84–88 (CCISS), 89–93 (CCKPS), 94–98 (CCRTT), 99–103 (CCRPS), 104–108 (CCISS), 109–113 (CCRPS), 114–118 (CCISS), 119–123 (CCKPS), 124–128 (CCQTT), 129–133 (CCRPS), 134–138 (CCISS), 144–148 (CCQPS), 149–153 (CCRPA), 154–158 (CCISS), 159–163 (CCHPS), 164–168 (CCVSS), 179–183 (CCRTT), and 189–193 (CCGSS). The segment at 34–193 (CCRTTCCRPS…CFHPICCGSS (160 aa)) is 29 X 5 AA repeats of C-C-[GIKRQVH]-[SPT]-[STA].

It belongs to the KRTAP type 4 family. Interacts with hair keratins. As to expression, expressed specifically in the middle/uper portions of the hair cortex. Not detected in the hair matrix or cuticle.

Functionally, in the hair cortex, hair keratin intermediate filaments are embedded in an interfilamentous matrix, consisting of hair keratin-associated proteins (KRTAP), which are essential for the formation of a rigid and resistant hair shaft through their extensive disulfide bond cross-linking with abundant cysteine residues of hair keratins. The matrix proteins include the high-sulfur and high-glycine-tyrosine keratins. The chain is Keratin-associated protein 4-3 (KRTAP4-3) from Homo sapiens (Human).